The following is a 313-amino-acid chain: MASDGTDVVALYGGANGLSHKSGSFSVKVGLAQMLRGGVIMDVVTPEQARIAEEAGACAVMALERVPADIRAQGGVARMSDPGLIRDIKRSVTIPVMAKARIGHLVEAQILEAIGVDYVDESEVLTLADDAHHINKNNFRVPFVCGCRDLGEALRRIREGAAMIRTKGEAGTGNVVEAVRHVRSVMGDIRALRSMDDDEVFSYAKRIAAPYDLVMQTKQLGRLPVVQFAAGGVATPADAALMMQLGCDGVFVGSGIFKSGDPALRARAIVQAVTHYSDPKILAEVSSGLGEAMVGINLSDPKIHVERFAARSD.

Asp-42 lines the D-ribose 5-phosphate pocket. Lys-99 acts as the Schiff-base intermediate with D-ribose 5-phosphate in catalysis. Gly-171 is a binding site for D-ribose 5-phosphate. A D-glyceraldehyde 3-phosphate-binding site is contributed by Arg-183. Residues Gly-232 and 253–254 each bind D-ribose 5-phosphate; that span reads GS.

The protein belongs to the PdxS/SNZ family.

It carries out the reaction aldehydo-D-ribose 5-phosphate + D-glyceraldehyde 3-phosphate + L-glutamine = pyridoxal 5'-phosphate + L-glutamate + phosphate + 3 H2O + H(+). It functions in the pathway cofactor biosynthesis; pyridoxal 5'-phosphate biosynthesis. Catalyzes the formation of pyridoxal 5'-phosphate from ribose 5-phosphate (RBP), glyceraldehyde 3-phosphate (G3P) and ammonia. The ammonia is provided by PDX2. Can also use ribulose 5-phosphate and dihydroxyacetone phosphate as substrates, resulting from enzyme-catalyzed isomerization of RBP and G3P, respectively. Also plays an indirect role in resistance to singlet oxygen-generating photosensitizers. The protein is Probable pyridoxal 5'-phosphate synthase subunit PDX1.2 (PDX12) of Oryza sativa subsp. japonica (Rice).